The primary structure comprises 149 residues: 3-dehydroquinate dehydratase (149 aa).

Tyr26 acts as the Proton acceptor in catalysis. Residues Asn75, His81, and Asp88 each coordinate substrate. The active-site Proton donor is His101. Substrate is bound by residues Leu102–Ser103 and Arg112.

It belongs to the type-II 3-dehydroquinase family. As to quaternary structure, homododecamer.

It catalyses the reaction 3-dehydroquinate = 3-dehydroshikimate + H2O. The protein operates within metabolic intermediate biosynthesis; chorismate biosynthesis; chorismate from D-erythrose 4-phosphate and phosphoenolpyruvate: step 3/7. Functionally, catalyzes a trans-dehydration via an enolate intermediate. The polypeptide is 3-dehydroquinate dehydratase (Shewanella woodyi (strain ATCC 51908 / MS32)).